The following is a 357-amino-acid chain: Dual-specificity RNA methyltransferase RlmN (357 aa).

Glutamate 89 acts as the Proton acceptor in catalysis. Residues 109–340 (EGEKYTVCVS…CTIRESKALD (232 aa)) enclose the Radical SAM core domain. Residues cysteine 116 and cysteine 345 are joined by a disulfide bond. [4Fe-4S] cluster-binding residues include cysteine 123, cysteine 127, and cysteine 130. S-adenosyl-L-methionine is bound by residues 173 to 174 (GE), serine 203, 226 to 228 (SLH), and asparagine 302. The S-methylcysteine intermediate role is filled by cysteine 345.

This sequence belongs to the radical SAM superfamily. RlmN family. It depends on [4Fe-4S] cluster as a cofactor.

It is found in the cytoplasm. The catalysed reaction is adenosine(2503) in 23S rRNA + 2 reduced [2Fe-2S]-[ferredoxin] + 2 S-adenosyl-L-methionine = 2-methyladenosine(2503) in 23S rRNA + 5'-deoxyadenosine + L-methionine + 2 oxidized [2Fe-2S]-[ferredoxin] + S-adenosyl-L-homocysteine. It carries out the reaction adenosine(37) in tRNA + 2 reduced [2Fe-2S]-[ferredoxin] + 2 S-adenosyl-L-methionine = 2-methyladenosine(37) in tRNA + 5'-deoxyadenosine + L-methionine + 2 oxidized [2Fe-2S]-[ferredoxin] + S-adenosyl-L-homocysteine. In terms of biological role, specifically methylates position 2 of adenine 2503 in 23S rRNA and position 2 of adenine 37 in tRNAs. m2A2503 modification seems to play a crucial role in the proofreading step occurring at the peptidyl transferase center and thus would serve to optimize ribosomal fidelity. This is Dual-specificity RNA methyltransferase RlmN from Helicobacter pylori (strain HPAG1).